Consider the following 158-residue polypeptide: Protein FAM177B (158 aa).

Over residues 36–48 the composition is skewed to acidic residues; it reads EYSTEEEEEEEKE. The interval 36–59 is disordered; that stretch reads EYSTEEEEEEEKEEQSTNSTLDPS.

The protein belongs to the FAM177 family.

This chain is Protein FAM177B (FAM177B), found in Homo sapiens (Human).